We begin with the raw amino-acid sequence, 334 residues long: Glyceraldehyde-3-phosphate dehydrogenase (334 aa).

Residues 12–13 and Gly111 each bind NAD(+); that span reads TI. 140–142 provides a ligand contact to D-glyceraldehyde 3-phosphate; the sequence is SCN. The active-site Nucleophile is the Cys141. Arg167 serves as a coordination point for NAD(+). Position 192-193 (192-193) interacts with D-glyceraldehyde 3-phosphate; the sequence is HG. Gln298 contributes to the NAD(+) binding site.

Belongs to the glyceraldehyde-3-phosphate dehydrogenase family. In terms of assembly, homotetramer.

The protein localises to the cytoplasm. The catalysed reaction is D-glyceraldehyde 3-phosphate + phosphate + NADP(+) = (2R)-3-phospho-glyceroyl phosphate + NADPH + H(+). The enzyme catalyses D-glyceraldehyde 3-phosphate + phosphate + NAD(+) = (2R)-3-phospho-glyceroyl phosphate + NADH + H(+). The protein operates within carbohydrate degradation; glycolysis; pyruvate from D-glyceraldehyde 3-phosphate: step 1/5. This is Glyceraldehyde-3-phosphate dehydrogenase (gap) from Pyrococcus abyssi (strain GE5 / Orsay).